A 472-amino-acid chain; its full sequence is Glutamate-1-semialdehyde 2,1-aminomutase 2, chloroplastic (472 aa).

The N-terminal 36 residues, 1-36, are a transit peptide targeting the chloroplast; it reads MAATLTGSGIALGFSCSAKFSKRASSSSNRRCIKMS. The residue at position 312 (K312) is an N6-(pyridoxal phosphate)lysine.

It belongs to the class-III pyridoxal-phosphate-dependent aminotransferase family. HemL subfamily. As to quaternary structure, homodimer. The cofactor is pyridoxal 5'-phosphate. In terms of tissue distribution, expressed in leaf primordia and shoot apical meristems (SAM).

Its subcellular location is the plastid. The protein localises to the chloroplast. It carries out the reaction (S)-4-amino-5-oxopentanoate = 5-aminolevulinate. It functions in the pathway porphyrin-containing compound metabolism; protoporphyrin-IX biosynthesis; 5-aminolevulinate from L-glutamyl-tRNA(Glu): step 2/2. Its pathway is porphyrin-containing compound metabolism; chlorophyll biosynthesis. In terms of biological role, transaminase converting glutamate 1-semialdehyde (GSA) to 5-aminolevulinate (ALA). Involved in the biosynthesis of tetrapyrroles. The sequence is that of Glutamate-1-semialdehyde 2,1-aminomutase 2, chloroplastic from Arabidopsis thaliana (Mouse-ear cress).